The chain runs to 299 residues: Small ribosomal subunit protein uS3 (299 aa).

The 69-residue stretch at 39 to 107 folds into the KH type-2 domain; the sequence is VREYLKAKLK…PVAVNIEEVR (69 aa). Positions 214–299 are disordered; sequence PVIKTDERED…AVAPGDAKGE (86 aa). A compositionally biased stretch (basic and acidic residues) spans 217 to 248; the sequence is KTDEREDDRRNRRGPRSDRPAGDRRPPSRDGA. The span at 257–282 shows a compositional bias: low complexity; it reads ADAGAAAPTDKPADGAAPAAADGPKA.

Belongs to the universal ribosomal protein uS3 family. Part of the 30S ribosomal subunit. Forms a tight complex with proteins S10 and S14.

In terms of biological role, binds the lower part of the 30S subunit head. Binds mRNA in the 70S ribosome, positioning it for translation. The sequence is that of Small ribosomal subunit protein uS3 from Methylibium petroleiphilum (strain ATCC BAA-1232 / LMG 22953 / PM1).